A 285-amino-acid chain; its full sequence is Bifunctional protein FolD (285 aa).

NADP(+) contacts are provided by residues G166–S168, S191, and I232.

It belongs to the tetrahydrofolate dehydrogenase/cyclohydrolase family. In terms of assembly, homodimer.

It carries out the reaction (6R)-5,10-methylene-5,6,7,8-tetrahydrofolate + NADP(+) = (6R)-5,10-methenyltetrahydrofolate + NADPH. The catalysed reaction is (6R)-5,10-methenyltetrahydrofolate + H2O = (6R)-10-formyltetrahydrofolate + H(+). It participates in one-carbon metabolism; tetrahydrofolate interconversion. Functionally, catalyzes the oxidation of 5,10-methylenetetrahydrofolate to 5,10-methenyltetrahydrofolate and then the hydrolysis of 5,10-methenyltetrahydrofolate to 10-formyltetrahydrofolate. The protein is Bifunctional protein FolD of Rickettsia typhi (strain ATCC VR-144 / Wilmington).